The primary structure comprises 308 residues: 15-cis-phytoene synthase (308 aa).

Belongs to the phytoene/squalene synthase family. Requires ATP as cofactor. It depends on Mn(2+) as a cofactor. Mg(2+) is required as a cofactor.

It catalyses the reaction 2 (2E,6E,10E)-geranylgeranyl diphosphate = 15-cis-phytoene + 2 diphosphate. It functions in the pathway carotenoid biosynthesis; phytoene biosynthesis. Involved in the biosynthesis of carotenoids. Catalyzes the condensation of two molecules of geranylgeranyl diphosphate (GGPP) to give prephytoene diphosphate (PPPP) and the subsequent rearrangement of the cyclopropylcarbinyl intermediate to yield 15-cis-phytoene. This Synechococcus elongatus (strain ATCC 33912 / PCC 7942 / FACHB-805) (Anacystis nidulans R2) protein is 15-cis-phytoene synthase (crtB).